Here is a 286-residue protein sequence, read N- to C-terminus: Spermidine/putrescine transport system permease protein PotB (286 aa).

The Cytoplasmic segment spans residues 1–13; the sequence is MKIINNKFQKITV. A helical transmembrane segment spans residues 14 to 33; that stretch reads AIIFSWLIFFVLIPNLLVLA. Residues 34 to 71 lie on the Periplasmic side of the membrane; that stretch reads VSFLTRDGSNFYAFPITIENYTNLFNPLYAQVVWNSLS. Residues 66–274 form the ABC transmembrane type-1 domain; sequence VWNSLSMSGI…MALLIFVYYR (209 aa). The helical transmembrane segment at 72-91 threads the bilayer; it reads MSGIATIICLLIGYPFAFMM. The Cytoplasmic segment spans residues 92–100; that stretch reads SKIHPKYRP. Residues 101 to 120 traverse the membrane as a helical segment; sequence LLLFLVVLPFWTNSLIRIYG. Topologically, residues 121–151 are periplasmic; sequence MKVFLGVKGILNTMLIDMGILSAPIRILNTE. Residues 152 to 171 traverse the membrane as a helical segment; the sequence is IAVIIGLVYLLLPFMILPLY. At 172–199 the chain is on the cytoplasmic side; that stretch reads SAIEKLDNRLLEAARDLGANTFQRFFRV. Residues 200-219 traverse the membrane as a helical segment; sequence ILPLTMPGIIAGCLLVLLPA. The Periplasmic portion of the chain corresponds to 220 to 252; that stretch reads MGMFYVADLLGGAKVLLVGNVIKSEFLISRNWP. Residues 253 to 272 traverse the membrane as a helical segment; sequence FGSAVSIGLTVLMALLIFVY. Over 273–286 the chain is Cytoplasmic; the sequence is YRANKLLNRKVELE.

It belongs to the binding-protein-dependent transport system permease family. CysTW subfamily.

It is found in the cell inner membrane. Required for the activity of the bacterial periplasmic transport system of putrescine and spermidine. The protein is Spermidine/putrescine transport system permease protein PotB (potB) of Haemophilus influenzae (strain ATCC 51907 / DSM 11121 / KW20 / Rd).